We begin with the raw amino-acid sequence, 77 residues long: Ras-related C3 botulinum toxin substrate 1 (77 aa).

22 to 24 is a binding site for GTP; the sequence is KLD. Lys53 participates in a covalent cross-link: Glycyl lysine isopeptide (Lys-Gly) (interchain with G-Cter in ubiquitin). 65-66 provides a ligand contact to GTP; it reads AL.

The protein belongs to the small GTPase superfamily. Rho family. In terms of assembly, interacts with NISCH. Interacts with PIP5K1A. Interacts with the GTP-bound form of RAB7A. Interacts with SRGAP2. Interacts with CYFIP1/SRA-1. Interacts with PLXNB3. Interacts with ARHGDIA; the interaction is induced by SEMA5A, mediated through PLXNB3 and inactivates and stabilizes RAC1. Interacts (GTP-bound form preferentially) with PKN2 (via the REM repeats); the interaction stimulates autophosphorylation and phosphorylation of PKN2. Interacts with the GEF proteins PREX1, RASGRF2, FARP1, FARP2, DOCK1, DOCK2 and DOCK7, which promote the exchange between GDP and GTP, and therefore activate it. Interacts with PARD6A, PARD6B and PARD6G in a GTP-dependent manner. Part of a quaternary complex containing PARD3, some PARD6 protein (PARD6A, PARD6B or PARD6G) and some atypical PKC protein (PRKCI or PRKCZ), which plays a central role in epithelial cell polarization. Found in a trimeric complex composed of DOCK1 and ELMO1, which plays a central role in phagocytosis of apoptotic cells. Interacts with RALBP1 via its effector domain. Interacts with PLXNB1. Part of a complex with MAP2K3, MAP3K3, CCM2 and DEF6. Interacts with BAIAP2, BAIAP2L1 and DEF6. Interacts with Y.pseudotuberculosis YPKA and PLCB2. Interacts with NOXA1. Interacts with ARHGEF2. Interacts with TBC1D2. Interacts with UNKL. Interacts with USP6. Interacts with SPATA13. Interacts with ARHGEF16; mediates activation of RAC1 by EPHA2. Interacts with ITGB4. Interacts with S100A8 and calprotectin (S100A8/9). Interacts with PACSIN2. Interacts (when active) with PPP5C (via TPR repeats); activates PPP5C phosphatase activity and translocates PPP5C to the cell membrane. Interacts with RAPH1 (via Ras associating and PH domains). Interacts with MTSS2 (via IMD domain); this interaction may be important to potentiate PDGF-induced RAC1 activation. Interacts with PAK2. Interacts (GTP-bound form) with SH3RF1 and SH3RF3. Found in a complex with SH3RF1, MAPK8IP1/JIP1, MAP3K11/MLK3, MAP2K7/MKK7 and MAPK8/JNK1. Interacts (both active GTP- or inactive GDP-bound forms) with SH3RF2. Interacts (GTP-bound form preferentially) with CYRIB. Interacts with DOCK4 (via DOCKER domain); functions as a guanine nucleotide exchange factor (GEF) for RAC1. Interacts with GARRE1. Interacts with RAP1GDS1. May interact with ARHGAP36. Interacts with DSG3; the interaction is required for DSG3 translocation to cell-cell junctions, organization of cortical F-actin bundles and actin anchoring at cell-cell junctions. Component of the phagocyte NADPH oxidase complex composed of an obligatory core heterodimer formed by the membrane proteins CYBA and CYBB and the cytosolic regulatory subunits NCF1/p47-phox, NCF2/p67-phox, NCF4/p40-phox and the small GTPase RAC1 or RAC2. Interacts with NCF2. The N-terminus is blocked. Post-translationally, GTP-bound active form is ubiquitinated by HACE1, leading to its degradation by the proteasome.

The protein resides in the cytoplasm. The protein localises to the membrane. Its subcellular location is the melanosome. It localises to the cell projection. It is found in the lamellipodium. The protein resides in the dendrite. The protein localises to the synapse. Its subcellular location is the nucleus. It catalyses the reaction GTP + H2O = GDP + phosphate + H(+). Its activity is regulated as follows. Regulated by guanine nucleotide exchange factors (GEFs) which promote the exchange of bound GDP for free GTP, GTPase activating proteins (GAPs) which increase the GTP hydrolysis activity, and GDP dissociation inhibitors which inhibit the dissociation of the nucleotide from the GTPase. GTP hydrolysis is stimulated by ARHGAP30. Functionally, plasma membrane-associated small GTPase which cycles between active GTP-bound and inactive GDP-bound states. In its active state, binds to a variety of effector proteins to regulate cellular responses such as secretory processes, phagocytosis of apoptotic cells, epithelial cell polarization, neurons adhesion, migration and differentiation, and growth-factor induced formation of membrane ruffles. Rac1 p21/rho GDI heterodimer is the active component of the cytosolic factor sigma 1, which is involved in stimulation of the NADPH oxidase activity in macrophages. Essential for the SPATA13-mediated regulation of cell migration and adhesion assembly and disassembly. Stimulates PKN2 kinase activity. In concert with RAB7A, plays a role in regulating the formation of RBs (ruffled borders) in osteoclasts. In podocytes, promotes nuclear shuttling of NR3C2; this modulation is required for a proper kidney functioning. Required for atypical chemokine receptor ACKR2-induced LIMK1-PAK1-dependent phosphorylation of cofilin (CFL1) and for up-regulation of ACKR2 from endosomal compartment to cell membrane, increasing its efficiency in chemokine uptake and degradation. In neurons, is involved in dendritic spine formation and synaptic plasticity. In hippocampal neurons, involved in spine morphogenesis and synapse formation, through local activation at synapses by guanine nucleotide exchange factors (GEFs), such as ARHGEF6/ARHGEF7/PIX. In synapses, seems to mediate the regulation of F-actin cluster formation performed by SHANK3. In neurons, plays a crucial role in regulating GABA(A) receptor synaptic stability and hence GABAergic inhibitory synaptic transmission through its role in PAK1 activation and eventually F-actin stabilization. Required for DSG3 translocation to cell-cell junctions, DSG3-mediated organization of cortical F-actin bundles and anchoring of actin at cell junctions; via interaction with DSG3. Subunit of the phagocyte NADPH oxidase complex that mediates the transfer of electrons from cytosolic NADPH to O2 to produce the superoxide anion (O2(-)). This chain is Ras-related C3 botulinum toxin substrate 1, found in Cavia porcellus (Guinea pig).